Reading from the N-terminus, the 205-residue chain is Protein N-terminal glutamine amidohydrolase (205 aa).

Active-site residues include C20, H74, and D90.

Belongs to the NTAQ1 family. As to quaternary structure, monomer.

The catalysed reaction is N-terminal L-glutaminyl-[protein] + H2O = N-terminal L-glutamyl-[protein] + NH4(+). In terms of biological role, mediates the side-chain deamidation of N-terminal glutamine residues to glutamate, an important step in N-end rule pathway of protein degradation. Conversion of the resulting N-terminal glutamine to glutamate renders the protein susceptible to arginylation, polyubiquitination and degradation as specified by the N-end rule. Does not act on substrates with internal or C-terminal glutamine and does not act on non-glutamine residues in any position. This Drosophila virilis (Fruit fly) protein is Protein N-terminal glutamine amidohydrolase (tun).